Here is a 517-residue protein sequence, read N- to C-terminus: Sugar transport protein MST1 (517 aa).

The Cytoplasmic portion of the chain corresponds to 1–25 (MAGGVIVANDGDGSAVDHGGRLTFS). A helical membrane pass occupies residues 26–46 (VVITCLVAASGGLIFGYDVGI). Residues 47-83 (SGGVSTMEPFLRRFFPGVVRRMAEARPGNEYCVYDSQ) are Extracellular-facing. The helical transmembrane segment at 84–104 (ALTAFTSSLYVAGLVASLVAS) threads the bilayer. The Cytoplasmic segment spans residues 105–120 (RVTRAMGRQAVMVMGG). Residues 121-141 (ALFFAGGAVTGFAVNIAMLIV) traverse the membrane as a helical segment. Residues 142–143 (GR) lie on the Extracellular side of the membrane. The chain crosses the membrane as a helical span at residues 144–164 (MLLGFGVGFTNQAAPLFLAEM). Topologically, residues 165–170 (APTRWR) are cytoplasmic. The chain crosses the membrane as a helical span at residues 171–191 (GSLTAGFQFFLAVGVVIATVT). Residues 192–203 (NYFASRVPWGWR) are Extracellular-facing. A helical membrane pass occupies residues 204-224 (LSLGLAGAPAVVIFLGALFLT). Over 225–288 (DTPSSLVMRG…AARREYRPYL (64 aa)) the chain is Cytoplasmic. Residues 289–309 (VFAVAMPMFFQLTGVIVISFF) form a helical membrane-spanning segment. Residues 310-325 (SPLVFRTVGFGSNAAL) lie on the Extracellular side of the membrane. Residues 326 to 346 (MGNVILGAVNLVCLMLSTLVI) form a helical membrane-spanning segment. At 347 to 352 (DRYGRK) the chain is on the cytoplasmic side. Residues 353–373 (VLFMVGGAIMIIAQVGVAWIM) traverse the membrane as a helical segment. Residues 374–389 (GAQVGKNGSEAMARPY) lie on the Extracellular side of the membrane. A helical membrane pass occupies residues 390–410 (AVAVVAFTCLHTAGFGWSWGP). Over 411–430 (LGWVIPGEIFPVDIRSAGQA) the chain is Cytoplasmic. A helical membrane pass occupies residues 431 to 451 (MNVSIGLGLTFVQTQSFLAML). Residues 452-456 (CRFRY) lie on the Extracellular side of the membrane. Residues 457 to 477 (GTFAYYAAWVAVMTVFIAVFL) traverse the membrane as a helical segment. The Cytoplasmic segment spans residues 478-517 (PETKGVPLESMATVWARHWYWKRFAREQPKTSADEPTGTY).

Belongs to the major facilitator superfamily. Sugar transporter (TC 2.A.1.1) family.

The protein resides in the membrane. Functionally, mediates active uptake of hexoses by sugar:proton symport. The chain is Sugar transport protein MST1 from Oryza sativa subsp. japonica (Rice).